The primary structure comprises 209 residues: Pyridoxal 5'-phosphate synthase subunit PdxT (209 aa).

Position 58 to 60 (G58 to S60) interacts with L-glutamine. C90 serves as the catalytic Nucleophile. L-glutamine contacts are provided by residues R119 and I148–R149. Catalysis depends on charge relay system residues H185 and E187.

Belongs to the glutaminase PdxT/SNO family. In the presence of PdxS, forms a dodecamer of heterodimers. Only shows activity in the heterodimer.

The catalysed reaction is aldehydo-D-ribose 5-phosphate + D-glyceraldehyde 3-phosphate + L-glutamine = pyridoxal 5'-phosphate + L-glutamate + phosphate + 3 H2O + H(+). It catalyses the reaction L-glutamine + H2O = L-glutamate + NH4(+). It participates in cofactor biosynthesis; pyridoxal 5'-phosphate biosynthesis. Functionally, catalyzes the hydrolysis of glutamine to glutamate and ammonia as part of the biosynthesis of pyridoxal 5'-phosphate. The resulting ammonia molecule is channeled to the active site of PdxS. The sequence is that of Pyridoxal 5'-phosphate synthase subunit PdxT from Clavibacter sepedonicus (Clavibacter michiganensis subsp. sepedonicus).